The chain runs to 164 residues: Transcription elongation factor GreA (164 aa).

Positions 12-38 (RRLERELERLKKERPGVILAIKEAREE) form a coiled coil.

It belongs to the GreA/GreB family.

Its function is as follows. Necessary for efficient RNA polymerase transcription elongation past template-encoded arresting sites. The arresting sites in DNA have the property of trapping a certain fraction of elongating RNA polymerases that pass through, resulting in locked ternary complexes. Cleavage of the nascent transcript by cleavage factors such as GreA or GreB allows the resumption of elongation from the new 3'terminus. GreA releases sequences of 2 to 3 nucleotides. This Solidesulfovibrio magneticus (strain ATCC 700980 / DSM 13731 / RS-1) (Desulfovibrio magneticus) protein is Transcription elongation factor GreA.